Reading from the N-terminus, the 412-residue chain is Transcription termination factor 3, mitochondrial (412 aa).

Residues 1-67 (MALLAQQLPR…IKTYRTLFWN (67 aa)) constitute a mitochondrion transit peptide.

Belongs to the mTERF family.

The protein resides in the mitochondrion. Functionally, binds promoter DNA and regulates initiation of transcription. Required for normal mitochondrial transcription and translation, and for normal assembly of mitochondrial respiratory complexes. Required for normal mitochondrial function. Maintains 16S rRNA levels and functions in mitochondrial ribosome assembly by regulating the biogenesis of the 39S ribosomal subunit. The polypeptide is Transcription termination factor 3, mitochondrial (Mterf3) (Mus musculus (Mouse)).